We begin with the raw amino-acid sequence, 81 residues long: MAHTVKIYDTCIGCTQCVRACPTDVLEMVPWDGCRANQIASAPRTEDCVGCKRCESACPTDFLSIRVYLGAETTRSMGLGY.

2 consecutive 4Fe-4S ferredoxin-type domains span residues 2–31 (AHTV…MVPW) and 39–68 (IASA…IRVY). 8 residues coordinate [4Fe-4S] cluster: C11, C14, C17, C21, C48, C51, C54, and C58.

In terms of assembly, the eukaryotic PSI reaction center is composed of at least 11 subunits. Requires [4Fe-4S] cluster as cofactor.

It localises to the plastid. The protein localises to the cyanelle thylakoid membrane. It catalyses the reaction reduced [plastocyanin] + hnu + oxidized [2Fe-2S]-[ferredoxin] = oxidized [plastocyanin] + reduced [2Fe-2S]-[ferredoxin]. Functionally, apoprotein for the two 4Fe-4S centers FA and FB of photosystem I (PSI); essential for photochemical activity. FB is the terminal electron acceptor of PSI, donating electrons to ferredoxin. The C-terminus interacts with PsaA/B/D and helps assemble the protein into the PSI complex. Required for binding of PsaD and PsaE to PSI. PSI is a cytochrome c6-ferredoxin oxidoreductase, converting photonic excitation into a charge separation, which transfers an electron from the donor P700 chlorophyll pair to the spectroscopically characterized acceptors A0, A1, FX, FA and FB in turn. This is Photosystem I iron-sulfur center from Cyanophora paradoxa.